Reading from the N-terminus, the 55-residue chain is Large ribosomal subunit protein bL33 (55 aa).

Belongs to the bacterial ribosomal protein bL33 family.

In Burkholderia cenocepacia (strain ATCC BAA-245 / DSM 16553 / LMG 16656 / NCTC 13227 / J2315 / CF5610) (Burkholderia cepacia (strain J2315)), this protein is Large ribosomal subunit protein bL33.